Consider the following 130-residue polypeptide: Small ribosomal subunit protein uS9 (130 aa).

It belongs to the universal ribosomal protein uS9 family.

In Citrobacter koseri (strain ATCC BAA-895 / CDC 4225-83 / SGSC4696), this protein is Small ribosomal subunit protein uS9.